A 661-amino-acid polypeptide reads, in one-letter code: Zeaxanthin epoxidase, chloroplastic (661 aa).

The transit peptide at 1-59 directs the protein to the chloroplast; it reads MLLFRATLLPSPPFFHKTYFSHLSPVIFSDDPLPVSLQRNRVSGCRKQKWRQIRTLALQ. Residues 81-109 and 359-372 contribute to the FAD site; these read RILI…LVFE and IFTW…LLGD. Positions 555 to 609 constitute an FHA domain; the sequence is HIIGSISHDDSEGISIHLPFPQVHKTHARIACKDNIFYLTDLQSQYGTWITDNEG.

The cofactor is FAD. As to expression, expressed in flower buds, lips and leaves. Detected in roots.

The protein resides in the plastid. It is found in the chloroplast. It carries out the reaction all-trans-zeaxanthin + 4 reduced [2Fe-2S]-[ferredoxin] + 2 O2 + 4 H(+) = all-trans-violaxanthin + 4 oxidized [2Fe-2S]-[ferredoxin] + 2 H2O. Its pathway is plant hormone biosynthesis; abscisate biosynthesis. Zeaxanthin epoxidase that plays an important role in the xanthophyll cycle and abscisic acid (ABA) biosynthesis. Converts zeaxanthin into antheraxanthin and subsequently violaxanthin. The sequence is that of Zeaxanthin epoxidase, chloroplastic (ZEP) from Oncidium hybrid cultivar (Orchid).